The sequence spans 75 residues: Exodeoxyribonuclease 7 small subunit (75 aa).

The protein belongs to the XseB family. In terms of assembly, heterooligomer composed of large and small subunits.

It is found in the cytoplasm. The catalysed reaction is Exonucleolytic cleavage in either 5'- to 3'- or 3'- to 5'-direction to yield nucleoside 5'-phosphates.. Its function is as follows. Bidirectionally degrades single-stranded DNA into large acid-insoluble oligonucleotides, which are then degraded further into small acid-soluble oligonucleotides. The chain is Exodeoxyribonuclease 7 small subunit from Listeria welshimeri serovar 6b (strain ATCC 35897 / DSM 20650 / CCUG 15529 / CIP 8149 / NCTC 11857 / SLCC 5334 / V8).